The chain runs to 393 residues: UPF0496 protein At2g18630 (393 aa).

Residues 1-20 (MMGGKSSKSKKNVEFGSPST) form a disordered region. A coiled-coil region spans residues 149–222 (VNQFEEENED…RLRNIKTWRR (74 aa)). The next 2 helical transmembrane spans lie at 226 to 246 (MVFV…AAVA) and 249 to 269 (PVVA…GKWC). The stretch at 299–356 (KEMDNISILVRKVEVEIESLLKKAEFAITEEKEVRLAIDEIKKKLDVFTETIEELGEH) forms a coiled coil.

The protein belongs to the UPF0496 family.

It localises to the membrane. The chain is UPF0496 protein At2g18630 from Arabidopsis thaliana (Mouse-ear cress).